Reading from the N-terminus, the 21-residue chain is Glucan endo-1,3-beta-glucosidase 2 (21 aa).

A disordered region spans residues 1-21; that stretch reads APGDLLWSDEFDGAAGSAPNP.

The enzyme catalyses Hydrolysis of (1-&gt;3)-beta-D-glucosidic linkages in (1-&gt;3)-beta-D-glucans.. The polypeptide is Glucan endo-1,3-beta-glucosidase 2 (Papiliotrema laurentii (Cryptococcus laurentii)).